Here is a 183-residue protein sequence, read N- to C-terminus: Peptidyl-prolyl cis-trans isomerase H (183 aa).

The PPIase cyclophilin-type domain maps to 19–182; that stretch reads FFDVALGGEP…QDVVIIQCGE (164 aa).

It belongs to the cyclophilin-type PPIase family. PPIase H subfamily.

The protein localises to the nucleus. It carries out the reaction [protein]-peptidylproline (omega=180) = [protein]-peptidylproline (omega=0). PPIases accelerate the folding of proteins. It catalyzes the cis-trans isomerization of proline imidic peptide bonds in oligopeptides. This Emericella nidulans (strain FGSC A4 / ATCC 38163 / CBS 112.46 / NRRL 194 / M139) (Aspergillus nidulans) protein is Peptidyl-prolyl cis-trans isomerase H (cyp3).